We begin with the raw amino-acid sequence, 240 residues long: UDP-2,3-diacylglucosamine hydrolase (240 aa).

Residues aspartate 8, histidine 10, aspartate 41, asparagine 79, and histidine 114 each coordinate Mn(2+). Residue 79–80 participates in substrate binding; it reads NR. Residues aspartate 122, serine 160, threonine 164, lysine 167, and histidine 195 each coordinate substrate. 2 residues coordinate Mn(2+): histidine 195 and histidine 197.

It belongs to the LpxH family. It depends on Mn(2+) as a cofactor.

It is found in the cell inner membrane. The enzyme catalyses UDP-2-N,3-O-bis[(3R)-3-hydroxytetradecanoyl]-alpha-D-glucosamine + H2O = 2-N,3-O-bis[(3R)-3-hydroxytetradecanoyl]-alpha-D-glucosaminyl 1-phosphate + UMP + 2 H(+). It functions in the pathway glycolipid biosynthesis; lipid IV(A) biosynthesis; lipid IV(A) from (3R)-3-hydroxytetradecanoyl-[acyl-carrier-protein] and UDP-N-acetyl-alpha-D-glucosamine: step 4/6. Hydrolyzes the pyrophosphate bond of UDP-2,3-diacylglucosamine to yield 2,3-diacylglucosamine 1-phosphate (lipid X) and UMP by catalyzing the attack of water at the alpha-P atom. Involved in the biosynthesis of lipid A, a phosphorylated glycolipid that anchors the lipopolysaccharide to the outer membrane of the cell. The chain is UDP-2,3-diacylglucosamine hydrolase from Pseudomonas paraeruginosa (strain DSM 24068 / PA7) (Pseudomonas aeruginosa (strain PA7)).